A 246-amino-acid polypeptide reads, in one-letter code: Uridylate kinase (246 aa).

11 to 14 is a binding site for ATP; that stretch reads KISG. Position 53 (G53) interacts with UMP. Residues G54 and R58 each coordinate ATP. UMP is bound by residues D74 and 135-142; that span reads TGSPYLTT. The ATP site is built by T162, Y169, and D172.

This sequence belongs to the UMP kinase family. Homohexamer.

Its subcellular location is the cytoplasm. It carries out the reaction UMP + ATP = UDP + ADP. The protein operates within pyrimidine metabolism; CTP biosynthesis via de novo pathway; UDP from UMP (UMPK route): step 1/1. Its activity is regulated as follows. Inhibited by UTP. Functionally, catalyzes the reversible phosphorylation of UMP to UDP. The polypeptide is Uridylate kinase (Chlamydia abortus (strain DSM 27085 / S26/3) (Chlamydophila abortus)).